The sequence spans 111 residues: MGSSSFLVLMVSLTLVTLVAVEGVKEDIEKAGVCPADNVRCFKSDPPQCHTDQDCLGERKCCYLHCGFKCVIPVKELEEGGNKDEDVSRPYPEPGWEAKCPGSSSTRCPQK.

The first 23 residues, 1 to 23 (MGSSSFLVLMVSLTLVTLVAVEG), serve as a signal peptide directing secretion. Residues 27–74 (DIEKAGVCPADNVRCFKSDPPQCHTDQDCLGERKCCYLHCGFKCVIPV) form the WAP domain. Disulfide bonds link Cys34–Cys62, Cys41–Cys66, Cys49–Cys61, and Cys55–Cys70. A disordered region spans residues 80–111 (GGNKDEDVSRPYPEPGWEAKCPGSSSTRCPQK). Residues 102–111 (GSSSTRCPQK) show a composition bias toward polar residues.

The protein localises to the secreted. Its function is as follows. Antibacterial protein. Putative acid-stable proteinase inhibitor. The polypeptide is WAP four-disulfide core domain protein 12 (WFDC12) (Pan troglodytes (Chimpanzee)).